The following is a 559-amino-acid chain: Acetolactate synthase, catabolic (559 aa).

Residues R159, 263-284 (FNNQ…IGYS), and 304-323 (DVLP…LVGD) each bind FAD. D447 contacts Mg(2+).

This sequence belongs to the TPP enzyme family. As to quaternary structure, homodimer.

The enzyme catalyses 2 pyruvate + H(+) = (2S)-2-acetolactate + CO2. It participates in polyol metabolism; (R,R)-butane-2,3-diol biosynthesis; (R,R)-butane-2,3-diol from pyruvate: step 1/3. The protein is Acetolactate synthase, catabolic (budB) of Raoultella terrigena (Klebsiella terrigena).